We begin with the raw amino-acid sequence, 316 residues long: Bifunctional peptidase and (3S)-lysyl hydroxylase JMJD7 (316 aa).

The region spanning 128–307 is the JmjC domain; that stretch reads VQKQCSNLPS…LKYSYFQLLD (180 aa). Positions 178, 180, and 277 each coordinate Fe cation.

Homodimer; disulfide-linked. Interacts with DRG1 and DRG2. It depends on Fe(2+) as a cofactor.

The protein resides in the nucleus. The protein localises to the cytoplasm. It catalyses the reaction L-lysyl-[protein] + 2-oxoglutarate + O2 = (3S)-3-hydroxy-L-lysyl-[protein] + succinate + CO2. In terms of biological role, bifunctional enzyme that acts both as an endopeptidase and 2-oxoglutarate-dependent monooxygenase. Endopeptidase that cleaves histones N-terminal tails at the carboxyl side of methylated arginine or lysine residues, to generate 'tailless nucleosomes', which may trigger transcription elongation. Preferentially recognizes and cleaves monomethylated and dimethylated arginine residues of histones H2, H3 and H4. After initial cleavage, continues to digest histones tails via its aminopeptidase activity. Additionally, may play a role in protein biosynthesis by modifying the translation machinery. Acts as a Fe(2+) and 2-oxoglutarate-dependent monooxygenase, catalyzing (S)-stereospecific hydroxylation at C-3 of 'Lys-22' of DRG1 and 'Lys-21' of DRG2 translation factors (TRAFAC), promoting their interaction with ribonucleic acids (RNA). This Homo sapiens (Human) protein is Bifunctional peptidase and (3S)-lysyl hydroxylase JMJD7.